The primary structure comprises 165 residues: Protein SprT (165 aa).

The SprT-like domain maps to 20–163 (ENLAQANLKL…RCVHCGEPLV (144 aa)). Residue His78 participates in Zn(2+) binding. Residue Glu79 is part of the active site. A Zn(2+)-binding site is contributed by His82.

The protein belongs to the SprT family. Requires Zn(2+) as cofactor.

It localises to the cytoplasm. The sequence is that of Protein SprT from Salmonella arizonae (strain ATCC BAA-731 / CDC346-86 / RSK2980).